We begin with the raw amino-acid sequence, 483 residues long: Probable 4-hydroxyphenylacetate 3-monooxygenase (483 aa).

Substrate is bound by residues 104–108 and His150; that span reads RSPDY. FAD contacts are provided by residues 150-152, 156-159, and Thr193; these read HTF and QVNR. 206-207 lines the substrate pocket; sequence AP. Residue 452–455 participates in FAD binding; that stretch reads DPIR.

Belongs to the FADH(2)-utilizing monooxygenase family.

It catalyses the reaction 4-hydroxyphenylacetate + FADH2 + O2 = 3,4-dihydroxyphenylacetate + FAD + H2O + H(+). The protein operates within aromatic compound metabolism; 4-hydroxyphenylacetate degradation; pyruvate and succinate semialdehyde from 4-hydroxyphenylacetate: step 1/7. Its function is as follows. Catalyzes the hydroxylation of 4-hydroxyphenylacetic acid (4HPA), leading to the production of 3,4-dihydroxyphenylacetic acid (DHPA). The chain is Probable 4-hydroxyphenylacetate 3-monooxygenase (yoaI) from Bacillus subtilis (strain 168).